The sequence spans 287 residues: Nucleotide-binding protein HEAR2885 (287 aa).

8-15 (GISGSGKS) contacts ATP. 57 to 60 (DVRS) is a GTP binding site.

Belongs to the RapZ-like family.

In terms of biological role, displays ATPase and GTPase activities. The polypeptide is Nucleotide-binding protein HEAR2885 (Herminiimonas arsenicoxydans).